A 197-amino-acid polypeptide reads, in one-letter code: Molybdenum cofactor guanylyltransferase (197 aa).

GTP-binding positions include 10–12 (LAG), K23, D69, and D99. Position 99 (D99) interacts with Mg(2+).

The protein belongs to the MobA family. Monomer. The cofactor is Mg(2+).

Its subcellular location is the cytoplasm. The catalysed reaction is Mo-molybdopterin + GTP + H(+) = Mo-molybdopterin guanine dinucleotide + diphosphate. Functionally, transfers a GMP moiety from GTP to Mo-molybdopterin (Mo-MPT) cofactor (Moco or molybdenum cofactor) to form Mo-molybdopterin guanine dinucleotide (Mo-MGD) cofactor. This chain is Molybdenum cofactor guanylyltransferase, found in Serratia proteamaculans (strain 568).